The chain runs to 759 residues: Protein MEI2-like 3 (759 aa).

RRM domains lie at 166–239 (RTLF…FSIP) and 251–324 (GTLV…HSRP).

Probable RNA-binding protein that plays a role in meiosis and vegetative growth. In Arabidopsis thaliana (Mouse-ear cress), this protein is Protein MEI2-like 3 (ML3).